The following is a 661-amino-acid chain: COBRA-like protein 7 (661 aa).

An N-terminal signal peptide occupies residues 1–26 (MDSAPNFIPRLLLLSLLIVSIPLTSS). A disordered region spans residues 26-45 (SQSDANTTNPSPSPPSDSDL). 14 N-linked (GlcNAc...) asparagine glycosylation sites follow: N31, N64, N122, N170, N314, N327, N356, N369, N398, N410, N430, N472, N551, and N561. A lipid anchor (GPI-anchor amidated serine) is attached at S637. Positions 638-661 (SQHRKHISVFLLALPVLALLILRA) are cleaved as a propeptide — removed in mature form.

It belongs to the COBRA family. As to expression, expressed in roots, stems, leaves, flowers and siliques.

The protein resides in the cell membrane. In Arabidopsis thaliana (Mouse-ear cress), this protein is COBRA-like protein 7 (COBL7).